Reading from the N-terminus, the 492-residue chain is GTPase Obg (492 aa).

Residues 2–159 (PRFVDRVVIH…RELTLELKTV (158 aa)) enclose the Obg domain. An OBG-type G domain is found at 160-340 (ADVGLIGFPS…LIFGLWQMIS (181 aa)). GTP is bound by residues 166-173 (GFPSAGKS), 191-195 (FTTLV), 212-215 (DVPG), 292-295 (NKID), and 321-323 (STV). 2 residues coordinate Mg(2+): Ser-173 and Thr-193. The OCT domain maps to 358–438 (PVPVDDSGFR…IGDMTFDWEP (81 aa)). Residues 449 to 492 (SGRGTDARLERTERVGAAERKAARRQRRTGDDAERGTTERGENT) are disordered. 2 stretches are compositionally biased toward basic and acidic residues: residues 453-469 (TDAR…AERK) and 476-492 (RTGD…GENT).

It belongs to the TRAFAC class OBG-HflX-like GTPase superfamily. OBG GTPase family. As to quaternary structure, monomer. Mg(2+) serves as cofactor.

The protein resides in the cytoplasm. Its function is as follows. An essential GTPase which binds GTP, GDP and possibly (p)ppGpp with moderate affinity, with high nucleotide exchange rates and a fairly low GTP hydrolysis rate. Plays a role in control of the cell cycle, stress response, ribosome biogenesis and in those bacteria that undergo differentiation, in morphogenesis control. The chain is GTPase Obg from Mycobacterium avium (strain 104).